The sequence spans 159 residues: Cyclic pyranopterin monophosphate synthase (159 aa).

Residues L75 to H77 and M113 to E114 contribute to the substrate site. The active site involves D128.

This sequence belongs to the MoaC family. In terms of assembly, homohexamer; trimer of dimers.

It carries out the reaction (8S)-3',8-cyclo-7,8-dihydroguanosine 5'-triphosphate = cyclic pyranopterin phosphate + diphosphate. It participates in cofactor biosynthesis; molybdopterin biosynthesis. Its function is as follows. Catalyzes the conversion of (8S)-3',8-cyclo-7,8-dihydroguanosine 5'-triphosphate to cyclic pyranopterin monophosphate (cPMP). This chain is Cyclic pyranopterin monophosphate synthase, found in Cereibacter sphaeroides (strain ATCC 17029 / ATH 2.4.9) (Rhodobacter sphaeroides).